Reading from the N-terminus, the 169-residue chain is MTHCCSPCCQPTCCRTTCWKPTTVTTCSSTPCCQPSCCVSSCCQPCCHPTCCQNTCCRTTCCQPTCVTSCCQPSCCSTPCCQPICCGSSCCGQTSCGSSCCQPSSCAPIYCRRTCYHPTSVYLPGCLNQSCGSSCCQPCCRPACCETTCCRTTCFQPTCVTSCCQPACC.

17 repeat units span residues 8 to 12, 13 to 17, 32 to 36, 37 to 41, 46 to 50, 51 to 55, 56 to 60, 61 to 65, 75 to 79, 80 to 84, 85 to 89, 90 to 94, 100 to 104, 139 to 143, 144 to 148, 149 to 153, and 163 to 167. Positions 8–167 are 17 X 5 AA repeats of C-C-[VGSREQH]-[SQTPN]-[STPAI]; sequence CCQPTCCRTT…TCVTSCCQPA (160 aa).

The protein belongs to the KRTAP type 9 family. In terms of assembly, interacts with hair keratins.

In terms of biological role, in the hair cortex, hair keratin intermediate filaments are embedded in an interfilamentous matrix, consisting of hair keratin-associated proteins (KRTAP), which are essential for the formation of a rigid and resistant hair shaft through their extensive disulfide bond cross-linking with abundant cysteine residues of hair keratins. The matrix proteins include the high-sulfur and high-glycine-tyrosine keratins. In Homo sapiens (Human), this protein is Keratin-associated protein 9-7.